The chain runs to 408 residues: Arginine biosynthesis bifunctional protein ArgJ 1 (408 aa).

The substrate site is built by Thr154, Lys180, Thr191, Glu277, Asn403, and Ser408. Thr191 serves as the catalytic Nucleophile.

Belongs to the ArgJ family. As to quaternary structure, heterotetramer of two alpha and two beta chains.

The protein localises to the cytoplasm. The enzyme catalyses N(2)-acetyl-L-ornithine + L-glutamate = N-acetyl-L-glutamate + L-ornithine. The catalysed reaction is L-glutamate + acetyl-CoA = N-acetyl-L-glutamate + CoA + H(+). Its pathway is amino-acid biosynthesis; L-arginine biosynthesis; L-ornithine and N-acetyl-L-glutamate from L-glutamate and N(2)-acetyl-L-ornithine (cyclic): step 1/1. The protein operates within amino-acid biosynthesis; L-arginine biosynthesis; N(2)-acetyl-L-ornithine from L-glutamate: step 1/4. Catalyzes two activities which are involved in the cyclic version of arginine biosynthesis: the synthesis of N-acetylglutamate from glutamate and acetyl-CoA as the acetyl donor, and of ornithine by transacetylation between N(2)-acetylornithine and glutamate. The polypeptide is Arginine biosynthesis bifunctional protein ArgJ 1 (Clostridium acetobutylicum (strain ATCC 824 / DSM 792 / JCM 1419 / IAM 19013 / LMG 5710 / NBRC 13948 / NRRL B-527 / VKM B-1787 / 2291 / W)).